The primary structure comprises 223 residues: NAD(P)H-hydrate epimerase (223 aa).

The YjeF N-terminal domain occupies 9-209; sequence MQKIDTYTVN…DIGLLTPPDF (201 aa). Residue 57-61 participates in (6S)-NADPHX binding; it reads NNGAD. The K(+) site is built by asparagine 58 and aspartate 119. (6S)-NADPHX contacts are provided by residues 123–129 and aspartate 152; that span reads GTGLNNL. Threonine 155 lines the K(+) pocket.

It belongs to the NnrE/AIBP family. K(+) is required as a cofactor.

The catalysed reaction is (6R)-NADHX = (6S)-NADHX. It carries out the reaction (6R)-NADPHX = (6S)-NADPHX. In terms of biological role, catalyzes the epimerization of the S- and R-forms of NAD(P)HX, a damaged form of NAD(P)H that is a result of enzymatic or heat-dependent hydration. This is a prerequisite for the S-specific NAD(P)H-hydrate dehydratase to allow the repair of both epimers of NAD(P)HX. The protein is NAD(P)H-hydrate epimerase of Leuconostoc gelidum subsp. gasicomitatum (strain DSM 15947 / CCUG 46042 / CECT 5767 / JCM 12535 / LMG 18811 / NBRC 113245 / TB1-10) (Leuconostoc gasicomitatum).